Consider the following 350-residue polypeptide: Sterol-4-alpha-carboxylate 3-dehydrogenase ERG26, decarboxylating (350 aa).

NADP(+) is bound by residues 12 to 18 (GGSGFLG), 63 to 64 (DL), and 85 to 87 (SAS). Positions 125 and 152 each coordinate substrate. NADP(+) is bound by residues Tyr-152, Lys-156, and 179-182 (PAGI). Residue Lys-156 is the Proton donor of the active site.

Belongs to the 3-beta-HSD family. In terms of assembly, heterotetramer of ERG25, ERG26, ERG27 and ERG28. ERG28 acts as a scaffold to tether ERG27 and other 4,4-demethylation-related enzymes, forming a demethylation enzyme complex, in the endoplasmic reticulum.

It is found in the endoplasmic reticulum membrane. It carries out the reaction 4beta-methylzymosterol-4alpha-carboxylate + NADP(+) = 3-dehydro-4-methylzymosterol + CO2 + NADPH. Its pathway is steroid biosynthesis; zymosterol biosynthesis; zymosterol from lanosterol: step 4/6. In terms of biological role, sterol-4-alpha-carboxylate 3-dehydrogenase; part of the third module of ergosterol biosynthesis pathway that includes the late steps of the pathway. ERG26 is a catalytic component of the C-4 demethylation complex that catalyzes the oxidative decarboxylation that results in a reduction of the 3-beta-hydroxy group at the C-3 carbon to an oxo group. The third module or late pathway involves the ergosterol synthesis itself through consecutive reactions that mainly occur in the endoplasmic reticulum (ER) membrane. Firstly, the squalene synthase ERG9 catalyzes the condensation of 2 farnesyl pyrophosphate moieties to form squalene, which is the precursor of all steroids. Squalene synthase is crucial for balancing the incorporation of farnesyl diphosphate (FPP) into sterol and nonsterol isoprene synthesis. Secondly, the squalene epoxidase ERG1 catalyzes the stereospecific oxidation of squalene to (S)-2,3-epoxysqualene, which is considered to be a rate-limiting enzyme in steroid biosynthesis. Then, the lanosterol synthase ERG7 catalyzes the cyclization of (S)-2,3 oxidosqualene to lanosterol, a reaction that forms the sterol core. In the next steps, lanosterol is transformed to zymosterol through a complex process involving various demethylation, reduction and desaturation reactions. The lanosterol 14-alpha-demethylase ERG11 (also known as CYP51) catalyzes C14-demethylation of lanosterol to produce 4,4'-dimethyl cholesta-8,14,24-triene-3-beta-ol, which is critical for ergosterol biosynthesis. The C-14 reductase ERG24 reduces the C14=C15 double bond of 4,4-dimethyl-cholesta-8,14,24-trienol to produce 4,4-dimethyl-cholesta-8,24-dienol. 4,4-dimethyl-cholesta-8,24-dienol is substrate of the C-4 demethylation complex ERG25-ERG26-ERG27 in which ERG25 catalyzes the three-step monooxygenation required for the demethylation of 4,4-dimethyl and 4alpha-methylsterols, ERG26 catalyzes the oxidative decarboxylation that results in a reduction of the 3-beta-hydroxy group at the C-3 carbon to an oxo group, and ERG27 is responsible for the reduction of the keto group on the C-3. ERG28 has a role as a scaffold to help anchor ERG25, ERG26 and ERG27 to the endoplasmic reticulum and ERG29 regulates the activity of the iron-containing C4-methylsterol oxidase ERG25. Then, the sterol 24-C-methyltransferase ERG6 catalyzes the methyl transfer from S-adenosyl-methionine to the C-24 of zymosterol to form fecosterol. The C-8 sterol isomerase ERG2 catalyzes the reaction which results in unsaturation at C-7 in the B ring of sterols and thus converts fecosterol to episterol. The sterol-C5-desaturase ERG3 then catalyzes the introduction of a C-5 double bond in the B ring to produce 5-dehydroepisterol. The C-22 sterol desaturase ERG5 further converts 5-dehydroepisterol into ergosta-5,7,22,24(28)-tetraen-3beta-ol by forming the C-22(23) double bond in the sterol side chain. Finally, ergosta-5,7,22,24(28)-tetraen-3beta-ol is substrate of the C-24(28) sterol reductase ERG4 to produce ergosterol. The polypeptide is Sterol-4-alpha-carboxylate 3-dehydrogenase ERG26, decarboxylating (Candida albicans (strain SC5314 / ATCC MYA-2876) (Yeast)).